Here is a 368-residue protein sequence, read N- to C-terminus: DNA-directed RNA polymerase II subunit GRINL1A (368 aa).

Positions lysine 29–valine 68 are important for transcription repressor activity. 3 stretches are compositionally biased toward polar residues: residues serine 116–glycine 131, glycine 205–glycine 224, and glutamine 258–serine 273. Disordered stretches follow at residues serine 116–serine 186, aspartate 203–lysine 227, and proline 255–lysine 282. Positions lysine 227–histidine 298 are interaction with Pol II. Serine 270 is subject to Phosphoserine. The tract at residues methionine 299 to lysine 314 is important for transcription repressor activity. Residues threonine 301–arginine 335 are a coiled coil. An interaction with Pol II region spans residues glutamine 315–methionine 340. Positions lysine 339–phenylalanine 368 are disordered. Over residues aspartate 358–phenylalanine 368 the composition is skewed to acidic residues.

Belongs to the GRINL1 family. Component of the Pol II(G) complex, which contains the RNA polymerase II (Pol II) core complex subunits and POLR2M isoform 1. Pol II(G) appears to be an abundant form of Pol II. Post-translationally, dephosphorylated at Ser-270 by the PNUTS-PP1 complex, promoting RNA polymerase II transcription pause-release. As to expression, detected in adult an fetal brain. Detected in heart, kidney, skeletal muscle, small intestine, lung, prostate and testis.

It localises to the nucleus. Appears to be a stable component of the Pol II(G) complex form of RNA polymerase II (Pol II). Pol II synthesizes mRNA precursors and many functional non-coding RNAs and is the central component of the basal RNA polymerase II transcription machinery. May play a role in the Mediator complex-dependent regulation of transcription activation. Acts as a negative regulator of transcriptional activation; this repression is relieved by the Mediator complex, which restores Pol II(G) activator-dependent transcription to a level equivalent to that of Pol II. The polypeptide is DNA-directed RNA polymerase II subunit GRINL1A (POLR2M) (Homo sapiens (Human)).